We begin with the raw amino-acid sequence, 1022 residues long: Sodium/potassium-transporting ATPase subunit alpha (1022 aa).

The propeptide occupies 1-5 (MGKGA). Positions 1 to 34 (MGKGAASEKYQPAATSENAKNSKKSKSKTTDLDE) are disordered. Topologically, residues 6–87 (ASEKYQPAAT…NALTPPPTTP (82 aa)) are cytoplasmic. S16 is modified (phosphoserine; by PKC). Residues 82-84 (PPP) are interaction with phosphoinositide-3 kinase. The helical transmembrane segment at 88 to 108 (EWIKFCRQLFGGFSILLWTGA) threads the bilayer. The Lumenal segment spans residues 109–131 (ILCFLAYGIQVATVDNPANDNLY). The helical transmembrane segment at 132-152 (LGVVLSTVVIITGCFSYYQEA) threads the bilayer. The Cytoplasmic segment spans residues 153 to 288 (KSSKIMDSFK…VGQTPIAAEI (136 aa)). Residues 215-235 (NSSLTGESEPQSRSPEYSSEN) form a disordered region. Residues 289-308 (EHFIHIITGVAVFLGVSFFI) form a helical membrane-spanning segment. Residues 309–320 (LSLILGYTWLEA) are Lumenal-facing. A helical membrane pass occupies residues 321 to 338 (VIFLIGIIVANVPEGLLA). The Cytoplasmic segment spans residues 339–771 (TVTVCLTLTA…EEGRLIFDNL (433 aa)). D376 serves as the catalytic 4-aspartylphosphate intermediate. Positions 716 and 720 each coordinate Mg(2+). A helical membrane pass occupies residues 772–791 (KKSIAYTLTSNIPEITPFLV). The Lumenal segment spans residues 792-801 (FIIANVPLPL). A helical membrane pass occupies residues 802–822 (GTVTILCIDLGTDMVPAISLA). At 823–842 (YERAESDIMKRQPRNPKTDK) the chain is on the cytoplasmic side. Residues 843–865 (LVNERLISMAYGQIGMIQALGGF) form a helical membrane-spanning segment. Residues 866 to 917 (FSYFVILAENGFLPIDLIGIREKWDELWTQDLEDSYGQQWTYEQRKIVEYTC) are Lumenal-facing. Residues 918 to 937 (HTSFFVSIVIVQWADLIICK) form a helical membrane-spanning segment. The Cytoplasmic segment spans residues 938–950 (TRRNSIFQQGMKN). S942 bears the Phosphoserine; by PKA mark. The helical transmembrane segment at 951–969 (KILIFGLFEETALAAFLSY) threads the bilayer. At 970–984 (TPGTDIALRMYPLKP) the chain is on the lumenal side. A helical membrane pass occupies residues 985-1005 (SWWFCAFPYSLIIFLYDEARR). Residues 1006–1022 (FILRRNPGGWVEQETYY) are Cytoplasmic-facing.

Belongs to the cation transport ATPase (P-type) (TC 3.A.3) family. Type IIC subfamily. In terms of assembly, the sodium/potassium-transporting ATPase is composed of a catalytic alpha subunit, an auxiliary non-catalytic beta subunit and an additional regulatory subunit.

The protein localises to the cell membrane. The catalysed reaction is K(+)(out) + Na(+)(in) + ATP + H2O = K(+)(in) + Na(+)(out) + ADP + phosphate + H(+). In terms of biological role, this is the catalytic component of the active enzyme, which catalyzes the hydrolysis of ATP coupled with the exchange of sodium and potassium ions across the plasma membrane. This action creates the electrochemical gradient of sodium and potassium ions, providing the energy for active transport of various nutrients. The protein is Sodium/potassium-transporting ATPase subunit alpha of Tetronarce californica (Pacific electric ray).